A 403-amino-acid chain; its full sequence is Probable tRNA sulfurtransferase (403 aa).

A THUMP domain is found at 60–165; that stretch reads KLAEERLKPI…KEGVFLSCRT (106 aa). Residues 183–184, 208–209, arginine 265, glycine 287, and glutamine 296 each bind ATP; these read ML and HF.

Belongs to the ThiI family.

The protein localises to the cytoplasm. The enzyme catalyses [ThiI sulfur-carrier protein]-S-sulfanyl-L-cysteine + a uridine in tRNA + 2 reduced [2Fe-2S]-[ferredoxin] + ATP + H(+) = [ThiI sulfur-carrier protein]-L-cysteine + a 4-thiouridine in tRNA + 2 oxidized [2Fe-2S]-[ferredoxin] + AMP + diphosphate. It carries out the reaction [ThiS sulfur-carrier protein]-C-terminal Gly-Gly-AMP + S-sulfanyl-L-cysteinyl-[cysteine desulfurase] + AH2 = [ThiS sulfur-carrier protein]-C-terminal-Gly-aminoethanethioate + L-cysteinyl-[cysteine desulfurase] + A + AMP + 2 H(+). It functions in the pathway cofactor biosynthesis; thiamine diphosphate biosynthesis. Catalyzes the ATP-dependent transfer of a sulfur to tRNA to produce 4-thiouridine in position 8 of tRNAs, which functions as a near-UV photosensor. Also catalyzes the transfer of sulfur to the sulfur carrier protein ThiS, forming ThiS-thiocarboxylate. This is a step in the synthesis of thiazole, in the thiamine biosynthesis pathway. The sulfur is donated as persulfide by IscS. In Listeria welshimeri serovar 6b (strain ATCC 35897 / DSM 20650 / CCUG 15529 / CIP 8149 / NCTC 11857 / SLCC 5334 / V8), this protein is Probable tRNA sulfurtransferase.